The following is a 436-amino-acid chain: Trigger factor (436 aa).

One can recognise a PPIase FKBP-type domain in the interval 161-246; the sequence is EDQLNIDFVG…VNSVSEPKLP (86 aa).

This sequence belongs to the FKBP-type PPIase family. Tig subfamily.

It localises to the cytoplasm. The enzyme catalyses [protein]-peptidylproline (omega=180) = [protein]-peptidylproline (omega=0). Its function is as follows. Involved in protein export. Acts as a chaperone by maintaining the newly synthesized protein in an open conformation. Functions as a peptidyl-prolyl cis-trans isomerase. The sequence is that of Trigger factor from Pseudomonas fluorescens (strain SBW25).